The chain runs to 576 residues: uncharacterized protein (576 aa).

Residues 1–8 (MSLSLGAA) lie on the Cytoplasmic side of the membrane. Residues 9-29 (IYIALKPIFKIYTIMLVGYLV) traverse the membrane as a helical segment. Residues 30 to 45 (AKFDIVSMENAKGISN) lie on the Extracellular side of the membrane. A helical membrane pass occupies residues 46–66 (MVVNAILPCLTFNKIVSNISW). Over 67–71 (RDIKE) the chain is Cytoplasmic. A helical membrane pass occupies residues 72-92 (IGVIILSAFILFVLGATGALF). Residues 93–103 (TTFATTVPKKF) lie on the Extracellular side of the membrane. A helical membrane pass occupies residues 104-124 (FWGLIFAGFFPNISDLPIAYI). Residues 125 to 141 (QSMGNGSIFTAEEADKG) lie on the Cytoplasmic side of the membrane. Residues 142–162 (VAYSCIFLFIQSFLMMNFGMW) form a helical membrane-spanning segment. Residues 163 to 400 (RVVGLDFRDT…FIINCLRPAS (238 aa)) are Extracellular-facing. The helical transmembrane segment at 401 to 421 (LGAILGIICALIPWVKACFVT) threads the bilayer. Residues 422–437 (TYVHVHKAPDGEPVLN) lie on the Cytoplasmic side of the membrane. Residues 438–458 (FLMDFTEYIGNACVPLGLLLL) form a helical membrane-spanning segment. Over 459 to 476 (GGTLARLEIKSLPPGFIK) the chain is Extracellular. A helical membrane pass occupies residues 477–497 (SALLMTCFRLIVIPIIGVLWV). At 498-512 (NKLYSIDWLDTGIGK) the chain is on the cytoplasmic side. A helical membrane pass occupies residues 513–533 (FDMILTWSMPSATAQVYFTAF). The Extracellular segment spans residues 534-545 (YTPACGDHIQMN). A helical transmembrane segment spans residues 546–566 (CLSVLFVMQYAILFITVAFVV). Over 567 to 576 (TYTLKVDLKV) the chain is Cytoplasmic.

The protein belongs to the auxin efflux carrier (TC 2.A.69) family.

The protein resides in the membrane. This is an uncharacterized protein from Saccharomyces cerevisiae (strain ATCC 204508 / S288c) (Baker's yeast).